A 403-amino-acid polypeptide reads, in one-letter code: Forkhead box protein Q1 (403 aa).

2 disordered regions span residues 1 to 75 (MKLE…PGAE) and 94 to 116 (GAAG…PYTR). Residues 32–48 (LSAAGDDSLGSDGDCAA) show a composition bias toward low complexity. Residues 96–107 (AGPGAGGAGSGE) are compositionally biased toward gly residues. A DNA-binding region (fork-head) is located at residues 119-214 (KPPYSYIALI…ADGVFRRRRK (96 aa)). Residues 216–266 (LSHRAPVPAPGLRPEEAPGLPAAPPPAPAAPASPRMRSPARQEERASPAGK) form a disordered region. Pro residues predominate over residues 236–246 (PAAPPPAPAAP).

As to expression, expressed predominantly in the stomach, trachea, bladder and salivary gland.

Its subcellular location is the nucleus. Its function is as follows. Plays a role in hair follicle differentiation. This Homo sapiens (Human) protein is Forkhead box protein Q1 (FOXQ1).